The chain runs to 415 residues: Serine hydroxymethyltransferase (415 aa).

Residues leucine 115 and 119 to 121 (GHL) each bind (6S)-5,6,7,8-tetrahydrofolate. At lysine 224 the chain carries N6-(pyridoxal phosphate)lysine. 348-350 (SPF) contacts (6S)-5,6,7,8-tetrahydrofolate.

Belongs to the SHMT family. As to quaternary structure, homodimer. Pyridoxal 5'-phosphate serves as cofactor.

Its subcellular location is the cytoplasm. The enzyme catalyses (6R)-5,10-methylene-5,6,7,8-tetrahydrofolate + glycine + H2O = (6S)-5,6,7,8-tetrahydrofolate + L-serine. It participates in one-carbon metabolism; tetrahydrofolate interconversion. Its pathway is amino-acid biosynthesis; glycine biosynthesis; glycine from L-serine: step 1/1. Its function is as follows. Catalyzes the reversible interconversion of serine and glycine with tetrahydrofolate (THF) serving as the one-carbon carrier. This reaction serves as the major source of one-carbon groups required for the biosynthesis of purines, thymidylate, methionine, and other important biomolecules. Also exhibits THF-independent aldolase activity toward beta-hydroxyamino acids, producing glycine and aldehydes, via a retro-aldol mechanism. This Latilactobacillus sakei subsp. sakei (strain 23K) (Lactobacillus sakei subsp. sakei) protein is Serine hydroxymethyltransferase.